We begin with the raw amino-acid sequence, 556 residues long: Trigger factor (556 aa).

The PPIase FKBP-type domain occupies 169–255 (GDVVVIDFAA…LREIKAKELP (87 aa)). Residues 438 to 452 (VDSEGNPTQAPTSLA) are compositionally biased toward polar residues. Positions 438-556 (VDSEGNPTQA…KPSKKDKKGK (119 aa)) are disordered. Positions 461–472 (PEAEFEADEPEA) are enriched in acidic residues. Composition is skewed to low complexity over residues 486–503 (ETATGAETDGEAAAAEAE) and 511–526 (EASPAETVSASAAEAT).

Belongs to the FKBP-type PPIase family. Tig subfamily.

The protein resides in the cytoplasm. The enzyme catalyses [protein]-peptidylproline (omega=180) = [protein]-peptidylproline (omega=0). In terms of biological role, involved in protein export. Acts as a chaperone by maintaining the newly synthesized protein in an open conformation. Functions as a peptidyl-prolyl cis-trans isomerase. This chain is Trigger factor, found in Synechococcus sp. (strain JA-2-3B'a(2-13)) (Cyanobacteria bacterium Yellowstone B-Prime).